The sequence spans 87 residues: Tachykinin-1 (87 aa).

The first 22 residues, 1–22, serve as a signal peptide directing secretion; the sequence is MIRVGLILCCIFIAGVFEASSA. The propeptide occupies 23-37; sequence DDMLTAHNLIKRSEV. The residue at position 49 (Met-49) is a Methionine amide. The propeptide occupies 52–87; sequence SEELTRRLIQHPGSMSETSKRGPPKKVSRRPYILKK. A disordered region spans residues 61–87; it reads QHPGSMSETSKRGPPKKVSRRPYILKK. The segment covering 73–87 has biased composition (basic residues); it reads GPPKKVSRRPYILKK.

It belongs to the tachykinin family. In terms of tissue distribution, expressed in the posterior salivary gland and more specifically in the mucus-secreting gland cells.

The protein resides in the secreted. Tachykinins are active peptides which excite neurons, evoke behavioral responses, are potent vasodilators and secretagogues, and contract (directly or indirectly) many smooth muscles. The protein is Tachykinin-1 of Octopus vulgaris (Common octopus).